The primary structure comprises 269 residues: Shikimate dehydrogenase (NADP(+)) (269 aa).

Shikimate contacts are provided by residues 17-19 (SKS) and T64. K68 acts as the Proton acceptor in catalysis. E80 is a binding site for NADP(+). Residues N89 and D105 each contribute to the shikimate site. Residues 130 to 134 (GAGGA), 154 to 159 (NRTHAK), and M213 each bind NADP(+). Y215 contacts shikimate. G237 is an NADP(+) binding site.

The protein belongs to the shikimate dehydrogenase family. In terms of assembly, homodimer.

It catalyses the reaction shikimate + NADP(+) = 3-dehydroshikimate + NADPH + H(+). It functions in the pathway metabolic intermediate biosynthesis; chorismate biosynthesis; chorismate from D-erythrose 4-phosphate and phosphoenolpyruvate: step 4/7. Its function is as follows. Involved in the biosynthesis of the chorismate, which leads to the biosynthesis of aromatic amino acids. Catalyzes the reversible NADPH linked reduction of 3-dehydroshikimate (DHSA) to yield shikimate (SA). The polypeptide is Shikimate dehydrogenase (NADP(+)) (Neisseria cinerea).